The chain runs to 254 residues: MEDSEKKLNQKSDDKPRKVRFKISSSYSGRVLKQVFEDGQELESPKEEYPHSFLQEALEPMDGVYGSGEVPKPQPYSPKLTAQRISVFRDSGAYTLAGSQPLFNDYKANDHKPPPIIDFGKIIIYTNNLKIIRTPMDKRDFMRKILQKEDVAEEASLMITGENDGDREQGCPLPERNGSPLPESERTFLHSQHTQDGLVPEDCLHCQGSGIATCSLCHGSKFSMLANRFKESYRALRCPACNENGLQPCRICSP.

Positions 1–16 are enriched in basic and acidic residues; sequence MEDSEKKLNQKSDDKP. 2 disordered regions span residues 1–20 and 161–183; these read MEDS…RKVR and GEND…PLPE.

Belongs to the GRXCR2 family. As to quaternary structure, interacts with TPRN; the interaction restricts TPRN to the stereocilum basal region. In terms of tissue distribution, expressed in sensory hair cells in the cochlea and vestibular organ.

The protein resides in the cell projection. Its subcellular location is the stereocilium. Its function is as follows. Required for hearing. Plays a role in maintaining cochlear stereocilia bundles that are involved in sound detection. Ensures the restriction of TPRN to the basal region of stereocilia in hair cells. The polypeptide is Glutaredoxin domain-containing cysteine-rich protein 2 (Grxcr2) (Mus musculus (Mouse)).